The primary structure comprises 192 residues: uncharacterized protein (192 aa).

The next 2 helical transmembrane spans lie at 31–51 and 119–139; these read IVET…YVYE and VPGA…LWEI.

It is found in the cell membrane. This is an uncharacterized protein from Thermotoga maritima (strain ATCC 43589 / DSM 3109 / JCM 10099 / NBRC 100826 / MSB8).